A 107-amino-acid polypeptide reads, in one-letter code: Thioredoxin (107 aa).

One can recognise a Thioredoxin domain in the interval 2–107 (AGVLKNVTDD…ALLRPGPVPR (106 aa)). Cys33 and Cys36 form a disulfide bridge.

This sequence belongs to the thioredoxin family.

Functionally, component of the thioredoxin-thioredoxin reductase system. Participates in various redox reactions through the reversible oxidation of its active center dithiol to a disulfide and catalyzes dithiol-disulfide exchange reactions. In Streptomyces clavuligerus, this protein is Thioredoxin (trxA).